A 324-amino-acid polypeptide reads, in one-letter code: UDP-N-acetylenolpyruvoylglucosamine reductase (324 aa).

The FAD-binding PCMH-type domain occupies 38-217 (AGGLAELMFQ…IRAEMDAVRQ (180 aa)). Residue Arg183 is part of the active site. The active-site Proton donor is Ser232. Residue Glu302 is part of the active site.

It belongs to the MurB family. FAD serves as cofactor.

Its subcellular location is the cytoplasm. It carries out the reaction UDP-N-acetyl-alpha-D-muramate + NADP(+) = UDP-N-acetyl-3-O-(1-carboxyvinyl)-alpha-D-glucosamine + NADPH + H(+). It participates in cell wall biogenesis; peptidoglycan biosynthesis. Functionally, cell wall formation. This is UDP-N-acetylenolpyruvoylglucosamine reductase from Allorhizobium ampelinum (strain ATCC BAA-846 / DSM 112012 / S4) (Agrobacterium vitis (strain S4)).